Here is a 354-residue protein sequence, read N- to C-terminus: MSLRKIIHVDCDCFYAAIEMRDDPRLAGRPMAVGGSPDHRGVIATCNYEARAYGVRSAMSSRHALKLCPDLLIVKPRFEAYREASREIHGIFRDYTELIEPLSLDEAYLDVSDSQWYSGSATRIAEDIRRRVARTLHITVSAGVAPNKFLAKIASDWRKPNGLFVITPAEVEAFVAALPVARLHGVGKVTADKLTRLGIETCLELREWSRLALVREFGSFGERLWGLARGIDERAVHNDSRRQSVSVENTYDTDLPDLASCLARLPELLDSLNERIARMDNSYRPDKPFVKVKFHDFSQTTMEQAGAGRDLESYRQLLGQAFARGSKPVRLLGVGVRLRDLRGAHEQLELFPPK.

In terms of domain architecture, UmuC spans 6–187; the sequence is IIHVDCDCFY…LPVARLHGVG (182 aa). Residues aspartate 10 and aspartate 105 each coordinate Mg(2+). Glutamate 106 is a catalytic residue.

This sequence belongs to the DNA polymerase type-Y family. In terms of assembly, monomer. The cofactor is Mg(2+).

It localises to the cytoplasm. It catalyses the reaction DNA(n) + a 2'-deoxyribonucleoside 5'-triphosphate = DNA(n+1) + diphosphate. In terms of biological role, poorly processive, error-prone DNA polymerase involved in untargeted mutagenesis. Copies undamaged DNA at stalled replication forks, which arise in vivo from mismatched or misaligned primer ends. These misaligned primers can be extended by PolIV. Exhibits no 3'-5' exonuclease (proofreading) activity. May be involved in translesional synthesis, in conjunction with the beta clamp from PolIII. The protein is DNA polymerase IV of Pseudomonas putida (strain GB-1).